The primary structure comprises 254 residues: Probable phosphatase Sbal_1472 (254 aa).

Residues His8, His10, His16, His41, Glu74, His102, His132, Asp193, and His195 each coordinate Zn(2+).

It belongs to the PHP family. Zn(2+) is required as a cofactor.

This chain is Probable phosphatase Sbal_1472, found in Shewanella baltica (strain OS155 / ATCC BAA-1091).